Here is a 431-residue protein sequence, read N- to C-terminus: Beta-lactamase hydrolase-like protein (431 aa).

Zn(2+)-binding residues include histidine 212, histidine 214, and histidine 286. Aspartate 309 contributes to the substrate binding site.

It belongs to the metallo-beta-lactamase superfamily. Zn(2+) is required as a cofactor.

Could play a role in cell adherence or biofilm development. In Agrobacterium fabrum (strain C58 / ATCC 33970) (Agrobacterium tumefaciens (strain C58)), this protein is Beta-lactamase hydrolase-like protein.